Consider the following 365-residue polypeptide: Flagellar P-ring protein (365 aa).

The signal sequence occupies residues 1 to 20 (MKLPHFFVLAALVLSGAAHA).

The protein belongs to the FlgI family. As to quaternary structure, the basal body constitutes a major portion of the flagellar organelle and consists of four rings (L,P,S, and M) mounted on a central rod.

The protein resides in the periplasm. Its subcellular location is the bacterial flagellum basal body. Assembles around the rod to form the L-ring and probably protects the motor/basal body from shearing forces during rotation. The chain is Flagellar P-ring protein from Thiobacillus denitrificans (strain ATCC 25259 / T1).